Reading from the N-terminus, the 241-residue chain is MSRHPEVKWAETTEKIFLTVVLADTKDTKVNLDPEGVFDFSAKVGPENHVYELKLELADKVNVEESKINIGERSIFCIIEKAEPERWNKLLRVKKPPHYVKVDWDKWVDEDDEGSAGAADMDMAGMEGMGGMGGMGGMGGMGGMGGMGGMGGMEGMDFSKLMGGMGGMGGMGGLEGLGGMGGMGGMGGMGGMGGMEEFEDSDDEEETAKSGDKKDDAVKEEGLATEKAPAAEETTSVKEDK.

The CS domain occupies Ser2–Leu91. 17 MGG repeats span residues Met129 to Gly131, Met132 to Gly134, Met135 to Gly137, Met138 to Gly140, Met141 to Gly143, Met144 to Gly146, Met147 to Gly149, Met150 to Gly152, Met162 to Gly164, Met165 to Gly167, Met168 to Gly170, Met171 to Gly173, Met180 to Gly182, Met183 to Gly185, Met186 to Gly188, Met189 to Gly191, and Met192 to Gly194. Positions Met129 to Gly194 are 17 X 3 AA repeats of M-G-G. Positions Gly188 to Lys241 are disordered. Residues Glu196–Glu206 are compositionally biased toward acidic residues. Residues Thr207–Ala224 are compositionally biased toward basic and acidic residues. Residues Thr225–Thr234 are compositionally biased toward low complexity.

It belongs to the p23/wos2 family. In terms of assembly, interacts with HSP90 in an ATP-dependent manner. Interacts with HSP90-5, HSP90-6 and HSP90-7. As to expression, widely expressed but preferentially in the root meristem.

The protein resides in the cytoplasm. It is found in the nucleus. Acts as a co-chaperone for HSP90. Controls root development through the modulation of auxin distribution in the root meristem. This chain is Co-chaperone protein p23-1, found in Arabidopsis thaliana (Mouse-ear cress).